The chain runs to 405 residues: MASLGVILFFVIASLIHGKPIHSERKAAKIPLEGSNLGYKKPNNIYGSRLSQGMRYPPSMMQLYQTLILGNDTDLSILEYPVLQESDAVLSLIAKSCVVVGNRWTLSFDMSSISSSNELKLAELRIRLPSFERSQDVTVEIYHTKEGQENLFMGSFKTNPSVAMGSSWKIFNLTRMLQYYLHQGEPFTNVEYIEVKNMHERAKPHVIKRGVRAEVEEGLQRNKDNTPASSFPTERVVLVVFTRDKPTASHFGSPSLIHTVESSKYVMSENTVRVTDTRRPRRNQKTKNTIVMNTIPSRSVGKTLCRRVDMIVDFEKIEWGDRIVYPKRFNAYRCEGACPIPLNETFKPTNHAYIKSLVKLYDQEKVECSSCVPVKMSPLSMLLYEDGEVVLKHHEDMIVDECGCN.

The N-terminal stretch at 1-18 (MASLGVILFFVIASLIHG) is a signal peptide. The propeptide occupies 19 to 282 (KPIHSERKAA…RVTDTRRPRR (264 aa)). N71, N172, and N343 each carry an N-linked (GlcNAc...) asparagine glycan. 3 cysteine pairs are disulfide-bonded: C305/C371, C334/C402, and C338/C404.

This sequence belongs to the TGF-beta family. Homodimer; disulfide-linked. Forms heterodimers with the TGF-beta family member derriere. Interacts with tsku; enhances nodal2 activity. First localized to the vegetal region of the blastula. Just prior to gastrulation (stage 10), this expression disappears and instead becomes localized to the dorsal marginal zone, with enrichment in the organizer.

The protein localises to the secreted. Functionally, cooperation and regulatory loops of multiple nodals are essential for mesendoderm patterning in early embryos. Essential for mesoderm formation and axial patterning during embryonic development. Activates the activin-like signaling pathway to induce dorsal and ventral mesoderm in animal cap ectoderm. In addition, also dorsalizes ventral marginal zone (VMZ) tissues during gastrulation. Induces muscle actin. Appears to act as both a short-range and long-range morphogen. The unprocessed protein inhibits bmp- and wnt-signaling. This Xenopus laevis (African clawed frog) protein is Nodal homolog 2-A (nodal2-a).